A 433-amino-acid polypeptide reads, in one-letter code: Schlafen-like protein 2 (433 aa).

The region spanning 1–168 (MADTSPRESK…LSVNFGSQPF (168 aa)) is the B30.2/SPRY domain. Residues 199–400 (EHVVVKLPFA…RRMASNKCVY (202 aa)) form an SLFN-like fold region. Residues E211 and E216 contribute to the active site.

It belongs to the Schlafen family. Component of the trimeric PUCH (precursor of 21U RNA 5'-end cleavage holoenzyme) complex; consisting of tofu-1, tofu-2 and either slfl-3 or slfl-4. Within the complex, interacts (via N-terminus) with tofu-1 (via N-terminus); the interaction stabilizes tofu-2 and may form a functional nuclease. Within the complex, interacts (via N-terminus) with slfl-3 (via N-terminus); the presence of tofu-1 is required for this interaction. Mg(2+) is required as a cofactor. As to expression, expressed in the germline.

It is found in the cytoplasm. Its subcellular location is the mitochondrion. Inhibited by ethylenediaminetetraacetic acid (EDTA). Component of the trimeric PUCH (precursor of 21U RNA 5'-end cleavage holoenzyme) complex, that acts as an endoribonuclease processing the 5'-end of precursor Piwi-interacting RNAs (piRNAs). The PUCH complex consists of tofu-1, tofu-2 and either slfl-3 or slfl-4, with tofu-2 exhibiting endoribonuclease activity. PUCH-mediated processing strictly requires a 7-methyl-G cap (m7 G-cap) and an uracil at position three (U3). PUCH also exhibits a strict bias for piRNA precursors with an A or G at position 1. Mature piRNA production is enhanced by the interaction of PUCH with the PETISCO complex, which is stabilizing piRNA precursors and allows their processing by PUCH. This is Schlafen-like protein 2 from Caenorhabditis elegans.